The primary structure comprises 37 residues: Hemextin B (37 aa).

As to quaternary structure, heterotetramer composed of 2 hemextin A and 2 hemextin B chains; non-covalently linked. Does not exist as a complex in the crude venom. In terms of processing, may contain several disulfide bonds. Expressed by the venom gland.

It is found in the secreted. Functionally, hemextin B (monomer): does not show anticoagulant activity. Seems only to synergitically enhance hemextin A activity. In terms of biological role, hemextin AB complex: specifically inhibits the activation of FX (F10) by the TF-FVIIa complex (extrinsic tenase complex (ETC)) (IC(50)= 100 nM, Ki=50 nM) by non-competitively inhibiting the enzymatic activity of FVIIa. The protein is Hemextin B of Hemachatus haemachatus (Rinkhals).